Consider the following 66-residue polypeptide: Defensin-B1 (66 aa).

An N-terminal signal peptide occupies residues 1-23; the sequence is MNAHVLLLCTILFLLVHTPPVLG. 3 disulfide bridges follow: cysteine 29-cysteine 56, cysteine 36-cysteine 50, and cysteine 40-cysteine 57. Positions 61–66 are excised as a propeptide; it reads VLMEDG.

The protein belongs to the beta-defensin family. As to expression, expressed at low levels in kidney, lung, and spleen.

The protein localises to the secreted. Its function is as follows. Has bactericidal activity. May act as a ligand for C-C chemokine receptor CCR6. Positively regulates the sperm motility and bactericidal activity in a CCR6-dependent manner. Binds to CCR6 and triggers Ca2+ mobilization in the sperm which is important for its motility. The chain is Defensin-B1 from Ornithorhynchus anatinus (Duckbill platypus).